Here is a 60-residue protein sequence, read N- to C-terminus: Large ribosomal subunit protein bL32 (60 aa).

The disordered stretch occupies residues 1–22 (MAVPARHTSKAKKNKRRTHYKL). The segment covering 7 to 20 (HTSKAKKNKRRTHY) has biased composition (basic residues).

It belongs to the bacterial ribosomal protein bL32 family.

This chain is Large ribosomal subunit protein bL32, found in Streptococcus pyogenes serotype M3 (strain ATCC BAA-595 / MGAS315).